Here is a 150-residue protein sequence, read N- to C-terminus: Large ribosomal subunit protein bL9 (150 aa).

Belongs to the bacterial ribosomal protein bL9 family.

Binds to the 23S rRNA. This chain is Large ribosomal subunit protein bL9, found in Shewanella woodyi (strain ATCC 51908 / MS32).